Reading from the N-terminus, the 186-residue chain is TATA box-binding protein-like 1 (186 aa).

The protein belongs to the TBP family.

The protein resides in the cytoplasm. It is found in the nucleus. Functionally, part of a specialized transcription system that mediates the transcription of most ribosomal proteins through the 5'-TCT-3' motif which is a core promoter element at these genes. Seems to also mediate the transcription of NF1. Does not bind the TATA box. Members of the TBP family are differentially required to regulate transcription and development during early embryogenesis. Particularly regulates genes that have a role in catabolism. The protein is TATA box-binding protein-like 1 (tbpl1) of Xenopus tropicalis (Western clawed frog).